A 292-amino-acid chain; its full sequence is NAD kinase (292 aa).

The Proton acceptor role is filled by Asp72. NAD(+) is bound by residues Asp72 to Gly73, Asn146 to Glu147, His157, Arg174, Asp176, and Thr187 to Ser192.

This sequence belongs to the NAD kinase family. Requires a divalent metal cation as cofactor.

It localises to the cytoplasm. It carries out the reaction NAD(+) + ATP = ADP + NADP(+) + H(+). Its function is as follows. Involved in the regulation of the intracellular balance of NAD and NADP, and is a key enzyme in the biosynthesis of NADP. Catalyzes specifically the phosphorylation on 2'-hydroxyl of the adenosine moiety of NAD to yield NADP. The chain is NAD kinase from Shewanella oneidensis (strain ATCC 700550 / JCM 31522 / CIP 106686 / LMG 19005 / NCIMB 14063 / MR-1).